The chain runs to 303 residues: UDP-N-acetylenolpyruvoylglucosamine reductase (303 aa).

An FAD-binding PCMH-type domain is found at 27 to 217; that stretch reads KVGGISQVFY…QTVRKLTQPI (191 aa). Arg175 is an active-site residue. The active-site Proton donor is Ser224. Glu294 is an active-site residue.

This sequence belongs to the MurB family. Requires FAD as cofactor.

It is found in the cytoplasm. It catalyses the reaction UDP-N-acetyl-alpha-D-muramate + NADP(+) = UDP-N-acetyl-3-O-(1-carboxyvinyl)-alpha-D-glucosamine + NADPH + H(+). Its pathway is cell wall biogenesis; peptidoglycan biosynthesis. Its function is as follows. Cell wall formation. The sequence is that of UDP-N-acetylenolpyruvoylglucosamine reductase from Orientia tsutsugamushi (strain Ikeda) (Rickettsia tsutsugamushi).